The following is a 72-amino-acid chain: uncharacterized protein (72 aa).

This is an uncharacterized protein from Schizosaccharomyces pombe (strain 972 / ATCC 24843) (Fission yeast).